Reading from the N-terminus, the 444-residue chain is Glucoside xylosyltransferase 2 (444 aa).

At 1-4 (MKLR) the chain is on the cytoplasmic side. Residues 5-25 (SKAAALLLLALAVLLLALLSL) traverse the membrane as a helical; Signal-anchor for type II membrane protein segment. Residues 26–444 (RARRDPEPPG…IIHMGPNPMS (419 aa)) are Lumenal-facing. Positions 31–101 (PEPPGFPARP…LARRPGETRS (71 aa)) are disordered. The span at 68-83 (RSPRRQPPRLRPRAGR) shows a compositional bias: basic residues. Positions 87–101 (ASREKLARRPGETRS) are enriched in basic and acidic residues. Asn-275 carries an N-linked (GlcNAc...) asparagine glycan.

This sequence belongs to the glycosyltransferase 8 family.

The protein localises to the membrane. It carries out the reaction 3-O-(beta-D-glucosyl)-L-seryl-[EGF-like domain protein] + UDP-alpha-D-xylose = 3-O-[alpha-D-xylosyl-(1-&gt;3)-beta-D-glucosyl]-L-seryl-[EGF-like domain protein] + UDP + H(+). Functionally, glycosyltransferase which elongates the O-linked glucose attached to EGF-like repeats in the extracellular domain of Notch proteins by catalyzing the addition of xylose. The protein is Glucoside xylosyltransferase 2 (Gxylt2) of Mus musculus (Mouse).